The sequence spans 217 residues: Large ribosomal subunit protein uL1 (217 aa).

The protein belongs to the universal ribosomal protein uL1 family. Part of the 50S ribosomal subunit.

Functionally, binds directly to 23S rRNA. Probably involved in E site tRNA release. Its function is as follows. Protein L1 is also a translational repressor protein, it controls the translation of its operon by binding to its mRNA. The polypeptide is Large ribosomal subunit protein uL1 (Thermoplasma acidophilum (strain ATCC 25905 / DSM 1728 / JCM 9062 / NBRC 15155 / AMRC-C165)).